The sequence spans 142 residues: RNA polymerase-binding transcription factor DksA (142 aa).

3 disordered regions span residues 1–20 (MQTA…EDEP), 51–70 (HLQK…SSET), and 119–142 (RPTA…HRDD). Residues 104-128 (CEETGEPIGLARLEARPTATMSVEA) form a dksA C4-type zinc finger. Over residues 128–142 (AQERHERRERVHRDD) the composition is skewed to basic and acidic residues.

This sequence belongs to the DksA family. As to quaternary structure, interacts directly with the RNA polymerase.

Its subcellular location is the cytoplasm. In terms of biological role, transcription factor that acts by binding directly to the RNA polymerase (RNAP). Required for negative regulation of rRNA expression and positive regulation of several amino acid biosynthesis promoters. The polypeptide is RNA polymerase-binding transcription factor DksA (Caulobacter vibrioides (strain ATCC 19089 / CIP 103742 / CB 15) (Caulobacter crescentus)).